Consider the following 391-residue polypeptide: Pectin acetylesterase 7 (391 aa).

The signal sequence occupies residues Met1–Ala23. Residues Ser171, Asp267, and His334 each act as charge relay system in the active site.

The protein belongs to the pectinacetylesterase family.

The protein localises to the secreted. It is found in the cell wall. In terms of biological role, hydrolyzes acetyl esters in homogalacturonan regions of pectin. In type I primary cell wall, galacturonic acid residues of pectin can be acetylated at the O-2 and O-3 positions. Decreasing the degree of acetylation of pectin gels in vitro alters their physical properties. In Arabidopsis thaliana (Mouse-ear cress), this protein is Pectin acetylesterase 7.